The chain runs to 399 residues: S-adenosylmethionine synthase (399 aa).

H16 contacts ATP. D18 provides a ligand contact to Mg(2+). Residue E44 participates in K(+) binding. L-methionine contacts are provided by E57 and Q100. A flexible loop region spans residues 100-110 (QSSDIAQGVNE). ATP-binding positions include 177 to 179 (DAK), 244 to 245 (RF), D253, 259 to 260 (RK), A276, and K280. D253 is a binding site for L-methionine. Residue K284 participates in L-methionine binding.

The protein belongs to the AdoMet synthase family. As to quaternary structure, homotetramer; dimer of dimers. Requires Mg(2+) as cofactor. It depends on K(+) as a cofactor.

It localises to the cytoplasm. The enzyme catalyses L-methionine + ATP + H2O = S-adenosyl-L-methionine + phosphate + diphosphate. It participates in amino-acid biosynthesis; S-adenosyl-L-methionine biosynthesis; S-adenosyl-L-methionine from L-methionine: step 1/1. Its function is as follows. Catalyzes the formation of S-adenosylmethionine (AdoMet) from methionine and ATP. The overall synthetic reaction is composed of two sequential steps, AdoMet formation and the subsequent tripolyphosphate hydrolysis which occurs prior to release of AdoMet from the enzyme. This Lactococcus lactis subsp. lactis (strain IL1403) (Streptococcus lactis) protein is S-adenosylmethionine synthase.